The following is a 485-amino-acid chain: uncharacterized protein (485 aa).

Its subcellular location is the virion. This is an uncharacterized protein from Acanthamoeba polyphaga mimivirus (APMV).